Here is a 536-residue protein sequence, read N- to C-terminus: Zinc finger protein 623 (536 aa).

The tract at residues 57-77 is disordered; it reads GELLGNPEGQSLGSSPSQDRG. Positions 64-74 are enriched in polar residues; the sequence is EGQSLGSSPSQ. 13 consecutive C2H2-type zinc fingers follow at residues 123 to 145, 151 to 173, 179 to 201, 207 to 229, 235 to 257, 263 to 285, 291 to 313, 319 to 341, 347 to 369, 375 to 397, 403 to 425, 431 to 453, and 459 to 481; these read NPCD…RISH, YTCD…QRIH, YVCN…QRVH, FKCA…QRVH, FECK…QRIH, YECN…YQIH, YECK…QRIH, FECN…QRIH, YVCN…QRIH, YECN…QKIH, YECK…QKIH, FECK…QIIH, and YVCS…QKIH. Residue Lys445 forms a Glycyl lysine isopeptide (Lys-Gly) (interchain with G-Cter in SUMO2) linkage. Residues 513 to 536 are disordered; that stretch reads LSLSKAPIHLGERSVDKGEHTGNL. The segment covering 522–536 has biased composition (basic and acidic residues); it reads LGERSVDKGEHTGNL.

This sequence belongs to the krueppel C2H2-type zinc-finger protein family.

The protein localises to the nucleus. Functionally, may be involved in transcriptional regulation. This Homo sapiens (Human) protein is Zinc finger protein 623 (ZNF623).